We begin with the raw amino-acid sequence, 212 residues long: Thymidylate kinase (212 aa).

Position 15–22 (15–22 (GIDGAGKS)) interacts with ATP.

It belongs to the thymidylate kinase family.

The enzyme catalyses dTMP + ATP = dTDP + ADP. Functionally, phosphorylation of dTMP to form dTDP in both de novo and salvage pathways of dTTP synthesis. The polypeptide is Thymidylate kinase (Chromobacterium violaceum (strain ATCC 12472 / DSM 30191 / JCM 1249 / CCUG 213 / NBRC 12614 / NCIMB 9131 / NCTC 9757 / MK)).